A 696-amino-acid polypeptide reads, in one-letter code: Glycine--tRNA ligase beta subunit (696 aa).

It belongs to the class-II aminoacyl-tRNA synthetase family. In terms of assembly, tetramer of two alpha and two beta subunits.

It is found in the cytoplasm. The catalysed reaction is tRNA(Gly) + glycine + ATP = glycyl-tRNA(Gly) + AMP + diphosphate. The sequence is that of Glycine--tRNA ligase beta subunit from Nitratidesulfovibrio vulgaris (strain DP4) (Desulfovibrio vulgaris).